Reading from the N-terminus, the 741-residue chain is Isocitrate dehydrogenase [NADP] (741 aa).

Positions 85 and 87 each coordinate NADP(+). D-threo-isocitrate is bound by residues serine 132, asparagine 135, arginine 139, arginine 145, and lysine 255. Asparagine 135 contributes to the NADP(+) binding site. Aspartate 350 contacts Mn(2+). 2 residues coordinate D-threo-isocitrate: tyrosine 420 and arginine 547. A Mn(2+)-binding site is contributed by aspartate 548. Serine 585, histidine 589, arginine 600, aspartate 602, and arginine 649 together coordinate NADP(+).

It belongs to the monomeric-type IDH family. Monomer. The cofactor is Mg(2+). Mn(2+) is required as a cofactor.

The protein resides in the cytoplasm. It catalyses the reaction D-threo-isocitrate + NADP(+) = 2-oxoglutarate + CO2 + NADPH. Activity is inhibited in the presence of Ca(2+). Functionally, catalyzes the oxidative decarboxylation of isocitrate to 2-oxoglutarate and carbon dioxide with the concomitant reduction of NADP(+). In Azotobacter vinelandii, this protein is Isocitrate dehydrogenase [NADP].